Reading from the N-terminus, the 470-residue chain is ATP synthase subunit beta (470 aa).

157–164 (GGAGVGKT) serves as a coordination point for ATP.

This sequence belongs to the ATPase alpha/beta chains family. As to quaternary structure, F-type ATPases have 2 components, CF(1) - the catalytic core - and CF(0) - the membrane proton channel. CF(1) has five subunits: alpha(3), beta(3), gamma(1), delta(1), epsilon(1). CF(0) has three main subunits: a(1), b(2) and c(9-12). The alpha and beta chains form an alternating ring which encloses part of the gamma chain. CF(1) is attached to CF(0) by a central stalk formed by the gamma and epsilon chains, while a peripheral stalk is formed by the delta and b chains.

It is found in the cell inner membrane. The enzyme catalyses ATP + H2O + 4 H(+)(in) = ADP + phosphate + 5 H(+)(out). Produces ATP from ADP in the presence of a proton gradient across the membrane. The catalytic sites are hosted primarily by the beta subunits. This chain is ATP synthase subunit beta, found in Geotalea daltonii (strain DSM 22248 / JCM 15807 / FRC-32) (Geobacter daltonii).